The sequence spans 129 residues: Glycine cleavage system H protein (129 aa).

The Lipoyl-binding domain occupies 24–106 (IATIGITEFA…YGEGWFLKVR (83 aa)). Lys65 bears the N6-lipoyllysine mark.

The protein belongs to the GcvH family. As to quaternary structure, the glycine cleavage system is composed of four proteins: P, T, L and H. The cofactor is (R)-lipoate.

Functionally, the glycine cleavage system catalyzes the degradation of glycine. The H protein shuttles the methylamine group of glycine from the P protein to the T protein. This Nostoc punctiforme (strain ATCC 29133 / PCC 73102) protein is Glycine cleavage system H protein.